The sequence spans 103 residues: N(4)-acetylcytidine amidohydrolase (103 aa).

The ASCH domain maps to 6 to 100; sequence ITFFQRFQDD…GESQFYVIEF (95 aa). Catalysis depends on K21, which acts as the Proton acceptor. The active-site Nucleophile is the T24. The Proton donor role is filled by E74.

It belongs to the N(4)-acetylcytidine amidohydrolase family.

It carries out the reaction N(4)-acetylcytidine + H2O = cytidine + acetate + H(+). The enzyme catalyses N(4)-acetyl-2'-deoxycytidine + H2O = 2'-deoxycytidine + acetate + H(+). The catalysed reaction is N(4)-acetylcytosine + H2O = cytosine + acetate + H(+). Its function is as follows. Catalyzes the hydrolysis of N(4)-acetylcytidine (ac4C). In Klebsiella pneumoniae subsp. pneumoniae (strain ATCC 700721 / MGH 78578), this protein is N(4)-acetylcytidine amidohydrolase.